The following is a 196-amino-acid chain: Probable malonic semialdehyde reductase RutE (196 aa).

It belongs to the nitroreductase family. HadB/RutE subfamily. The cofactor is FMN.

The enzyme catalyses 3-hydroxypropanoate + NADP(+) = 3-oxopropanoate + NADPH + H(+). May reduce toxic product malonic semialdehyde to 3-hydroxypropionic acid, which is excreted. The protein is Probable malonic semialdehyde reductase RutE of Klebsiella pneumoniae subsp. pneumoniae (strain ATCC 700721 / MGH 78578).